Here is a 234-residue protein sequence, read N- to C-terminus: Sugar fermentation stimulation protein A (234 aa).

The segment at residues 201-220 is a DNA-binding region (H-T-H motif); sequence LLSEAQNKGVEVLAYKAELS.

It belongs to the SfsA family.

In terms of biological role, binds to DNA non-specifically. Could be a regulatory factor involved in maltose metabolism. The protein is Sugar fermentation stimulation protein A of Salmonella agona (strain SL483).